The chain runs to 262 residues: Purine nucleoside phosphorylase SSP1584 (262 aa).

Zn(2+) is bound by residues histidine 79, cysteine 124, and histidine 141.

The protein belongs to the purine nucleoside phosphorylase YfiH/LACC1 family. In terms of assembly, homodimer. The cofactor is Cu(2+). Zn(2+) is required as a cofactor.

The catalysed reaction is adenosine + phosphate = alpha-D-ribose 1-phosphate + adenine. It catalyses the reaction S-methyl-5'-thioadenosine + phosphate = 5-(methylsulfanyl)-alpha-D-ribose 1-phosphate + adenine. It carries out the reaction inosine + phosphate = alpha-D-ribose 1-phosphate + hypoxanthine. The enzyme catalyses adenosine + H2O + H(+) = inosine + NH4(+). Functionally, purine nucleoside enzyme that catalyzes the phosphorolysis of adenosine and inosine nucleosides, yielding D-ribose 1-phosphate and the respective free bases, adenine and hypoxanthine. Also catalyzes the phosphorolysis of S-methyl-5'-thioadenosine into adenine and S-methyl-5-thio-alpha-D-ribose 1-phosphate. Also has adenosine deaminase activity. The protein is Purine nucleoside phosphorylase SSP1584 of Staphylococcus saprophyticus subsp. saprophyticus (strain ATCC 15305 / DSM 20229 / NCIMB 8711 / NCTC 7292 / S-41).